The primary structure comprises 431 residues: Adenylosuccinate synthetase (431 aa).

Residues 13–19 (GDEGKGK) and 41–43 (GHT) each bind GTP. Catalysis depends on aspartate 14, which acts as the Proton acceptor. Mg(2+) is bound by residues aspartate 14 and glycine 41. IMP is bound by residues 14 to 17 (DEGK), 39 to 42 (NAGH), threonine 130, arginine 144, glutamine 225, threonine 240, and arginine 306. The Proton donor role is filled by histidine 42. A substrate-binding site is contributed by 302–308 (ATTGRQR). GTP-binding positions include arginine 308, 334-336 (KLD), and 416-418 (STG).

This sequence belongs to the adenylosuccinate synthetase family. As to quaternary structure, homodimer. Mg(2+) is required as a cofactor.

It localises to the cytoplasm. The catalysed reaction is IMP + L-aspartate + GTP = N(6)-(1,2-dicarboxyethyl)-AMP + GDP + phosphate + 2 H(+). It functions in the pathway purine metabolism; AMP biosynthesis via de novo pathway; AMP from IMP: step 1/2. Functionally, plays an important role in the de novo pathway of purine nucleotide biosynthesis. Catalyzes the first committed step in the biosynthesis of AMP from IMP. This Halorhodospira halophila (strain DSM 244 / SL1) (Ectothiorhodospira halophila (strain DSM 244 / SL1)) protein is Adenylosuccinate synthetase.